A 334-amino-acid polypeptide reads, in one-letter code: Glyceraldehyde-3-phosphate dehydrogenase 1 (334 aa).

NAD(+) contacts are provided by residues 12–13, Asp-35, and Arg-79; that span reads RI. D-glyceraldehyde 3-phosphate is bound by residues 152–154, Thr-183, Arg-198, 211–212, and Arg-234; these read SCT and SG. The active-site Nucleophile is Cys-153. Asn-315 contributes to the NAD(+) binding site.

It belongs to the glyceraldehyde-3-phosphate dehydrogenase family. In terms of assembly, homotetramer.

It is found in the cytoplasm. The enzyme catalyses D-glyceraldehyde 3-phosphate + phosphate + NAD(+) = (2R)-3-phospho-glyceroyl phosphate + NADH + H(+). The protein operates within carbohydrate degradation; glycolysis; pyruvate from D-glyceraldehyde 3-phosphate: step 1/5. Its activity is regulated as follows. Resistant to pentalenolactone. Catalyzes the oxidative phosphorylation of glyceraldehyde 3-phosphate (G3P) to 1,3-bisphosphoglycerate (BPG) using the cofactor NAD. The first reaction step involves the formation of a hemiacetal intermediate between G3P and a cysteine residue, and this hemiacetal intermediate is then oxidized to a thioester, with concomitant reduction of NAD to NADH. The reduced NADH is then exchanged with the second NAD, and the thioester is attacked by a nucleophilic inorganic phosphate to produce BPG. This Streptomyces avermitilis (strain ATCC 31267 / DSM 46492 / JCM 5070 / NBRC 14893 / NCIMB 12804 / NRRL 8165 / MA-4680) protein is Glyceraldehyde-3-phosphate dehydrogenase 1 (gap1).